We begin with the raw amino-acid sequence, 228 residues long: UPF0173 metal-dependent hydrolase Tpen_1493 (228 aa).

This sequence belongs to the UPF0173 family.

This is UPF0173 metal-dependent hydrolase Tpen_1493 from Thermofilum pendens (strain DSM 2475 / Hrk 5).